Consider the following 179-residue polypeptide: Large ribosomal subunit protein uL6 (179 aa).

This sequence belongs to the universal ribosomal protein uL6 family. As to quaternary structure, part of the 50S ribosomal subunit.

Its function is as follows. This protein binds to the 23S rRNA, and is important in its secondary structure. It is located near the subunit interface in the base of the L7/L12 stalk, and near the tRNA binding site of the peptidyltransferase center. The sequence is that of Large ribosomal subunit protein uL6 from Nocardioides sp. (strain ATCC BAA-499 / JS614).